The following is a 299-amino-acid chain: Serine/threonine-protein kinase 1 (299 aa).

The Protein kinase domain occupies 39–277 (IATKPMFEGG…FKGLVSHPWF (239 aa)). ATP-binding positions include 45–53 (FEGGRRNNV) and Lys66. Asp153 acts as the Proton acceptor in catalysis.

Belongs to the protein kinase superfamily. Ser/Thr protein kinase family.

It localises to the virion. The protein resides in the host cytoplasm. It carries out the reaction L-seryl-[protein] + ATP = O-phospho-L-seryl-[protein] + ADP + H(+). The catalysed reaction is L-threonyl-[protein] + ATP = O-phospho-L-threonyl-[protein] + ADP + H(+). In terms of biological role, essential for viral replication. It may mediate the virus progression through DNA replication. This chain is Serine/threonine-protein kinase 1, found in African swine fever virus (isolate Pig/Kenya/KEN-50/1950) (ASFV).